The chain runs to 22 residues: Hemocyanin subunit 4 (22 aa).

The protein belongs to the tyrosinase family. Hemocyanin subfamily. As to expression, hemolymph.

The protein resides in the secreted. Its subcellular location is the extracellular space. Its function is as follows. Hemocyanins are copper-containing oxygen carriers occurring freely dissolved in the hemolymph of many mollusks and arthropods. This Homarus americanus (American lobster) protein is Hemocyanin subunit 4.